The primary structure comprises 317 residues: Neuroguidin-A (317 aa).

Disordered stretches follow at residues 125–170 (ENDP…SKVK) and 280–317 (SALTGGEGRAEDMVPSMKKSKKGPKKSKKKKGFSRRRH). Acidic residues predominate over residues 146–157 (DERESDSGEEGA). Residues 297-317 (KKSKKGPKKSKKKKGFSRRRH) are compositionally biased toward basic residues.

It belongs to the SAS10 family. In terms of assembly, part of the small subunit (SSU) processome, composed of more than 70 proteins and the RNA chaperone small nucleolar RNA (snoRNA) U3.

The protein localises to the nucleus. The protein resides in the nucleolus. It is found in the chromosome. It localises to the centromere. Its subcellular location is the cytoplasm. The protein localises to the cell projection. The protein resides in the axon. It is found in the dendrite. It localises to the filopodium. Part of the small subunit (SSU) processome, first precursor of the small eukaryotic ribosomal subunit. During the assembly of the SSU processome in the nucleolus, many ribosome biogenesis factors, an RNA chaperone and ribosomal proteins associate with the nascent pre-rRNA and work in concert to generate RNA folding, modifications, rearrangements and cleavage as well as targeted degradation of pre-ribosomal RNA by the RNA exosome. Its dissociation from the complex determines the transition from state pre-A1 to state pre-A1*. May inhibit mRNA translation. The polypeptide is Neuroguidin-A (ngdn-a) (Xenopus laevis (African clawed frog)).